The sequence spans 476 residues: Glutamate--tRNA ligase (476 aa).

A 'HIGH' region motif is present at residues 9-19 (PSPTGTLHLGT). A 'KMSKS' region motif is present at residues 248-252 (KLSKR). Lys251 is an ATP binding site.

It belongs to the class-I aminoacyl-tRNA synthetase family. Glutamate--tRNA ligase type 1 subfamily. As to quaternary structure, monomer.

Its subcellular location is the cytoplasm. It carries out the reaction tRNA(Glu) + L-glutamate + ATP = L-glutamyl-tRNA(Glu) + AMP + diphosphate. Functionally, catalyzes the attachment of glutamate to tRNA(Glu) in a two-step reaction: glutamate is first activated by ATP to form Glu-AMP and then transferred to the acceptor end of tRNA(Glu). This Prochlorococcus marinus (strain NATL1A) protein is Glutamate--tRNA ligase.